We begin with the raw amino-acid sequence, 316 residues long: Nucleoside diphosphate-linked moiety X motif 6 (316 aa).

The Nudix hydrolase domain maps to Ser-141–Tyr-273. Positions Gly-176–Gly-197 match the Nudix box motif.

This sequence belongs to the Nudix hydrolase family. As to quaternary structure, monomer and homodimer. In terms of tissue distribution, detected in liver, kidney and esophagus (at protein level). Ubiquitous.

The protein resides in the cytoplasm. Its subcellular location is the nucleus. It is found in the mitochondrion. May contribute to the regulation of cell proliferation. This chain is Nucleoside diphosphate-linked moiety X motif 6 (NUDT6), found in Homo sapiens (Human).